The chain runs to 273 residues: Nicotinamide N-methyltransferase (273 aa).

S-adenosyl-L-methionine-binding positions include tyrosine 35, tyrosine 40, 74 to 75, tyrosine 80, aspartate 96, asparagine 101, and 152 to 153; these read GA and NV.

The protein belongs to the class I-like SAM-binding methyltransferase superfamily. NNMT/PNMT/TEMT family.

It catalyses the reaction nicotinamide + S-adenosyl-L-methionine = 1-methylnicotinamide + S-adenosyl-L-homocysteine. In terms of biological role, catalyzes the N-methylation of nicotinamide and other pyridines to form pyridinium ions. Involved in regulation of lifespan extension downstream of the sirtuin sir-2.1, probably through its role in nicotinic acid metabolism. The chain is Nicotinamide N-methyltransferase from Caenorhabditis elegans.